The sequence spans 369 residues: UDP-N-acetylglucosamine--N-acetylmuramyl-(pentapeptide) pyrophosphoryl-undecaprenol N-acetylglucosamine transferase (369 aa).

UDP-N-acetyl-alpha-D-glucosamine-binding positions include 16–18 (TGG), N130, R171, S203, I253, and Q298.

Belongs to the glycosyltransferase 28 family. MurG subfamily.

The protein resides in the cell inner membrane. The catalysed reaction is di-trans,octa-cis-undecaprenyl diphospho-N-acetyl-alpha-D-muramoyl-L-alanyl-D-glutamyl-meso-2,6-diaminopimeloyl-D-alanyl-D-alanine + UDP-N-acetyl-alpha-D-glucosamine = di-trans,octa-cis-undecaprenyl diphospho-[N-acetyl-alpha-D-glucosaminyl-(1-&gt;4)]-N-acetyl-alpha-D-muramoyl-L-alanyl-D-glutamyl-meso-2,6-diaminopimeloyl-D-alanyl-D-alanine + UDP + H(+). Its pathway is cell wall biogenesis; peptidoglycan biosynthesis. Cell wall formation. Catalyzes the transfer of a GlcNAc subunit on undecaprenyl-pyrophosphoryl-MurNAc-pentapeptide (lipid intermediate I) to form undecaprenyl-pyrophosphoryl-MurNAc-(pentapeptide)GlcNAc (lipid intermediate II). The protein is UDP-N-acetylglucosamine--N-acetylmuramyl-(pentapeptide) pyrophosphoryl-undecaprenol N-acetylglucosamine transferase of Cytophaga hutchinsonii (strain ATCC 33406 / DSM 1761 / CIP 103989 / NBRC 15051 / NCIMB 9469 / D465).